We begin with the raw amino-acid sequence, 859 residues long: Leucine--tRNA ligase (859 aa).

The 'HIGH' region signature appears at 42–52 (PYPSGRLHMGH). Residues 618 to 622 (KMSKS) carry the 'KMSKS' region motif. An ATP-binding site is contributed by K621.

This sequence belongs to the class-I aminoacyl-tRNA synthetase family.

Its subcellular location is the cytoplasm. The enzyme catalyses tRNA(Leu) + L-leucine + ATP = L-leucyl-tRNA(Leu) + AMP + diphosphate. This chain is Leucine--tRNA ligase, found in Shewanella putrefaciens (strain CN-32 / ATCC BAA-453).